Consider the following 397-residue polypeptide: Flavohemoprotein A (397 aa).

Positions 2–137 (SLSQQSISII…IAQAFIDAEA (136 aa)) constitute a Globin domain. His84 contacts heme b. Residues Tyr94 and Glu136 each act as charge relay system in the active site. Residues 150–397 (WRDTREFIVD…YEIFGPLTNV (248 aa)) are reductase. The FAD-binding FR-type domain maps to 151 to 266 (RDTREFIVDR…SPPAGDYVVD (116 aa)). FAD contacts are provided by residues Tyr189 and 208–211 (RHYS). 279–284 (GVGITP) provides a ligand contact to NADP(+). 390-393 (IFGP) provides a ligand contact to FAD.

Belongs to the globin family. Two-domain flavohemoproteins subfamily. The protein in the C-terminal section; belongs to the flavoprotein pyridine nucleotide cytochrome reductase family. Requires FAD as cofactor. The cofactor is heme b.

It is found in the cytoplasm. The catalysed reaction is 2 nitric oxide + NADPH + 2 O2 = 2 nitrate + NADP(+) + H(+). The enzyme catalyses 2 nitric oxide + NADH + 2 O2 = 2 nitrate + NAD(+) + H(+). Is involved in NO detoxification in an aerobic process, termed nitric oxide dioxygenase (NOD) reaction that utilizes O(2) and NAD(P)H to convert NO to nitrate, which protects the cell from various noxious nitrogen compounds. Therefore, plays a central role in the inducible response to nitrosative stress. Functionally, in the presence of oxygen and NADH, it has NADH oxidase activity, which leads to the generation of superoxide and H(2)O(2). Under anaerobic conditions, it also exhibits nitric oxide reductase and FAD reductase activities. However, all these reactions are much lower than NOD activity. This is Flavohemoprotein A (fhbA) from Dictyostelium discoideum (Social amoeba).